The following is a 114-amino-acid chain: Putative toxin HigB3 (114 aa).

The protein belongs to the mycobacterial HigB family.

Functionally, putative toxic component of a type II toxin-antitoxin (TA) system. Its cognate antitoxin would be HigA3. Not toxic upon expression in M.smegmatis. The chain is Putative toxin HigB3 from Mycobacterium tuberculosis (strain ATCC 25618 / H37Rv).